The primary structure comprises 351 residues: Dihydroorotate dehydrogenase (quinone) (351 aa).

FMN-binding positions include 67-71 (AGFDK) and Thr-91. Residue Lys-71 coordinates substrate. 116–120 (NAMGF) contributes to the substrate binding site. FMN contacts are provided by Asn-145 and Asn-178. Asn-178 is a substrate binding site. Catalysis depends on Ser-181, which acts as the Nucleophile. Asn-183 contributes to the substrate binding site. The FMN site is built by Lys-214 and Thr-242. 243-244 (NT) contacts substrate. FMN contacts are provided by residues Gly-262, Gly-291, and 312–313 (YS).

The protein belongs to the dihydroorotate dehydrogenase family. Type 2 subfamily. As to quaternary structure, monomer. The cofactor is FMN.

Its subcellular location is the cell membrane. The catalysed reaction is (S)-dihydroorotate + a quinone = orotate + a quinol. The protein operates within pyrimidine metabolism; UMP biosynthesis via de novo pathway; orotate from (S)-dihydroorotate (quinone route): step 1/1. Catalyzes the conversion of dihydroorotate to orotate with quinone as electron acceptor. The protein is Dihydroorotate dehydrogenase (quinone) (pyrD) of Helicobacter pylori (strain J99 / ATCC 700824) (Campylobacter pylori J99).